The primary structure comprises 299 residues: Prohibitin-2 (299 aa).

At A2 the chain carries N-acetylalanine. Residues 19 to 49 form a necessary for transcriptional repression region; sequence MGTALKLLLGAGAVAYGVRESVFTVEGGHRA. Y128 carries the post-translational modification Phosphotyrosine. Residue K147 is modified to N6-acetyllysine. The necessary for transcriptional repression stretch occupies residues 150–174; the sequence is ASQLITQRAQVSLLIRRELTERAKD. Residue S151 is modified to Phosphoserine. Residues 190-238 adopt a coiled-coil conformation; the sequence is SREYTAAVEAKQVAQQEAQRAQFLVEKAKQEQRQKIVQAEGEAEAAKML. 4 positions are modified to N6-acetyllysine: K200, K236, K250, and K262.

It belongs to the prohibitin family. As to quaternary structure, the mitochondrial prohibitin complex consists of two subunits (PHB1 and PHB2), assembled into a membrane-associated ring-shaped supercomplex of approximately 1 mDa. Interacts with ESR1, HDAC1 and HDAC5. Interacts with ZNF703. Interacts with STOML2. Interacts with ARFGEF3. Interacts with SPHK2. Interacts with COX4I1; the interaction associates PHB2 with COX. Interacts with MAP1LC3B (membrane-bound form LC3-II); the interaction is direct and upon mitochondrial depolarization and proteasome-dependent outer membrane rupture. Interacts with IGFBP6 (via C-terminal domain). Interacts with CLPB. Interacts with CD86 (via cytoplasmic domain); the interactions increases after priming with CD40. Interacts with AFG3L2. Interacts with DNAJC19. Interacts with AKT2; this interaction may be important for myogenic differentiation. Phosphorylated. Tyrosine phosphorylation is indirectly stimulated by IGFBP6.

It localises to the mitochondrion inner membrane. The protein localises to the cytoplasm. The protein resides in the nucleus. It is found in the cell membrane. Functionally, protein with pleiotropic attributes mediated in a cell-compartment- and tissue-specific manner, which include the plasma membrane-associated cell signaling functions, mitochondrial chaperone, and transcriptional co-regulator of transcription factors and sex steroid hormones in the nucleus. In terms of biological role, in the mitochondria, together with PHB, forms large ring complexes (prohibitin complexes) in the inner mitochondrial membrane (IMM) and functions as a chaperone protein that stabilizes mitochondrial respiratory enzymes and maintains mitochondrial integrity in the IMM, which is required for mitochondrial morphogenesis, neuronal survival, and normal lifespan. The prohibitin complex, with DNAJC19, regulates cardiolipin remodeling and the protein turnover of OMA1 in a cardiolipin-binding manner. Also regulates cytochrome-c oxidase assembly (COX) and mitochondrial respiration. Binding to sphingoid 1-phosphate (SPP) modulates its regulator activity. Has a key role of mitophagy receptor involved in targeting mitochondria for autophagic degradation. Involved in mitochondrial-mediated antiviral innate immunity, activates RIG-I-mediated signal transduction and production of IFNB1 and pro-inflammatory cytokine IL6. Its function is as follows. In the nucleus, serves as transcriptional co-regulator. Acts as a mediator of transcriptional repression by nuclear hormone receptors via recruitment of histone deacetylases. Functions as an estrogen receptor (ER)-selective coregulator that potentiates the inhibitory activities of antiestrogens and represses the activity of estrogens. Competes with NCOA1 for modulation of ER transcriptional activity. In the plasma membrane, is involved in IGFBP6-induced cell migration. Cooperates with CD86 to mediate CD86-signaling in B lymphocytes that regulates the level of IgG1 produced through the activation of distal signaling intermediates. Upon CD40 engagement, required to activate NF-kappa-B signaling pathway via phospholipase C and protein kinase C activation. This Pongo abelii (Sumatran orangutan) protein is Prohibitin-2 (PHB2).